A 132-amino-acid polypeptide reads, in one-letter code: Small ribosomal subunit protein uS8 (132 aa).

The protein belongs to the universal ribosomal protein uS8 family. Part of the 30S ribosomal subunit. Contacts proteins S5 and S12.

One of the primary rRNA binding proteins, it binds directly to 16S rRNA central domain where it helps coordinate assembly of the platform of the 30S subunit. The protein is Small ribosomal subunit protein uS8 of Ehrlichia canis (strain Jake).